Consider the following 73-residue polypeptide: UPF0154 protein BCG9842_B1526 (73 aa).

A helical transmembrane segment spans residues 3-23 (IWLGILVGVVALVAGVALGFF).

The protein belongs to the UPF0154 family.

It is found in the cell membrane. This is UPF0154 protein BCG9842_B1526 from Bacillus cereus (strain G9842).